Reading from the N-terminus, the 345-residue chain is Biotin synthase (345 aa).

Residues 66–291 (PEVEIEGIIS…RTILRFAGGR (226 aa)) enclose the Radical SAM core domain. Cys-81, Cys-85, and Cys-88 together coordinate [4Fe-4S] cluster. The [2Fe-2S] cluster site is built by Cys-124, Cys-157, Cys-216, and Arg-286.

This sequence belongs to the radical SAM superfamily. Biotin synthase family. As to quaternary structure, homodimer. It depends on [4Fe-4S] cluster as a cofactor. [2Fe-2S] cluster serves as cofactor.

It carries out the reaction (4R,5S)-dethiobiotin + (sulfur carrier)-SH + 2 reduced [2Fe-2S]-[ferredoxin] + 2 S-adenosyl-L-methionine = (sulfur carrier)-H + biotin + 2 5'-deoxyadenosine + 2 L-methionine + 2 oxidized [2Fe-2S]-[ferredoxin]. Its pathway is cofactor biosynthesis; biotin biosynthesis; biotin from 7,8-diaminononanoate: step 2/2. Catalyzes the conversion of dethiobiotin (DTB) to biotin by the insertion of a sulfur atom into dethiobiotin via a radical-based mechanism. This Mycobacterium leprae (strain Br4923) protein is Biotin synthase.